The following is a 172-amino-acid chain: RNA silencing suppressor p19 (172 aa).

The span at 1–20 (MERAIQGNDAREQANSERWD) shows a compositional bias: basic and acidic residues. Residues 1 to 38 (MERAIQGNDAREQANSERWDGGSGSSTSPFQLPDESPS) form a disordered region.

Belongs to the tombusvirus protein p19 family. In terms of assembly, homodimer.

In terms of biological role, viral suppressor of RNA silencing which binds specifically to silencing RNAs (siRNAs). Acts as a molecular caliper to specifically select siRNAs based on the length of the duplex region of the RNA. The chain is RNA silencing suppressor p19 from Tomato bushy stunt virus (strain type) (TBSV).